Reading from the N-terminus, the 354-residue chain is S-adenosylmethionine:tRNA ribosyltransferase-isomerase (354 aa).

It belongs to the QueA family. Monomer.

Its subcellular location is the cytoplasm. The catalysed reaction is 7-aminomethyl-7-carbaguanosine(34) in tRNA + S-adenosyl-L-methionine = epoxyqueuosine(34) in tRNA + adenine + L-methionine + 2 H(+). It participates in tRNA modification; tRNA-queuosine biosynthesis. Functionally, transfers and isomerizes the ribose moiety from AdoMet to the 7-aminomethyl group of 7-deazaguanine (preQ1-tRNA) to give epoxyqueuosine (oQ-tRNA). This chain is S-adenosylmethionine:tRNA ribosyltransferase-isomerase, found in Pseudomonas syringae pv. syringae (strain B728a).